A 37-amino-acid chain; its full sequence is Large ribosomal subunit protein bL36 (37 aa).

It belongs to the bacterial ribosomal protein bL36 family.

The polypeptide is Large ribosomal subunit protein bL36 (Salinispora tropica (strain ATCC BAA-916 / DSM 44818 / JCM 13857 / NBRC 105044 / CNB-440)).